Consider the following 436-residue polypeptide: ATP-dependent RNA helicase SUB2 (436 aa).

Residues 1–16 show a composition bias toward acidic residues; the sequence is MSAEEDLIDYSDEELN. Residues 1-33 form a disordered region; the sequence is MSAEEDLIDYSDEELNTNETAAPAADSNGKKGE. The short motif at 52–80 is the Q motif element; that stretch reads TGFRDFLLKPELLRAIGDCGFEHPSEVQQ. The Helicase ATP-binding domain maps to 83–258; sequence IPQAMLGGDI…KKFMQNPTEH (176 aa). ATP is bound at residue 96–103; the sequence is AKSGLGKT. Positions 205–208 match the DEAD box motif; it reads DECD. Positions 270-431 constitute a Helicase C-terminal domain; sequence GLQQYFVALE…EFPKDGIDAS (162 aa).

This sequence belongs to the DEAD box helicase family. DECD subfamily.

It localises to the nucleus. It carries out the reaction ATP + H2O = ADP + phosphate + H(+). Functionally, ATP-binding RNA helicase involved in transcription elongation and required for the export of mRNA out of the nucleus. SUB2 also plays a role in pre-mRNA splicing and spliceosome assembly. May be involved in rDNA and telomeric silencing, and maintenance of genome integrity. The protein is ATP-dependent RNA helicase SUB2 (SUB2) of Pyricularia oryzae (strain 70-15 / ATCC MYA-4617 / FGSC 8958) (Rice blast fungus).